A 356-amino-acid chain; its full sequence is Cyanide hydratase (356 aa).

The region spanning tyrosine 6–leucine 285 is the CN hydrolase domain. The active-site Proton acceptor is the glutamate 46. Residue lysine 128 is part of the active site. Cysteine 163 acts as the Nucleophile in catalysis.

The protein belongs to the carbon-nitrogen hydrolase superfamily. Nitrilase family. In terms of assembly, oligomer of dimers, forming left-handed helical fibers.

The catalysed reaction is formamide = hydrogen cyanide + H2O. In terms of biological role, catalyzes the hydration of cyanide to formamide. Degradation of cyanide may be important for plant pathogenic fungi in infection of cyanogenic plants. The sequence is that of Cyanide hydratase from Leptosphaeria maculans (Blackleg fungus).